We begin with the raw amino-acid sequence, 368 residues long: Probable dual-specificity RNA methyltransferase RlmN (368 aa).

The active-site Proton acceptor is the E100. The 239-residue stretch at 106-344 (QYYGLSVCVT…CVVRQEHGTD (239 aa)) folds into the Radical SAM core domain. An intrachain disulfide couples C113 to C349. [4Fe-4S] cluster-binding residues include C120, C124, and C127. Residues 172 to 173 (GE), S204, 227 to 229 (SLH), and N305 contribute to the S-adenosyl-L-methionine site. C349 acts as the S-methylcysteine intermediate in catalysis.

Belongs to the radical SAM superfamily. RlmN family. The cofactor is [4Fe-4S] cluster.

Its subcellular location is the cytoplasm. It catalyses the reaction adenosine(2503) in 23S rRNA + 2 reduced [2Fe-2S]-[ferredoxin] + 2 S-adenosyl-L-methionine = 2-methyladenosine(2503) in 23S rRNA + 5'-deoxyadenosine + L-methionine + 2 oxidized [2Fe-2S]-[ferredoxin] + S-adenosyl-L-homocysteine. It carries out the reaction adenosine(37) in tRNA + 2 reduced [2Fe-2S]-[ferredoxin] + 2 S-adenosyl-L-methionine = 2-methyladenosine(37) in tRNA + 5'-deoxyadenosine + L-methionine + 2 oxidized [2Fe-2S]-[ferredoxin] + S-adenosyl-L-homocysteine. Functionally, specifically methylates position 2 of adenine 2503 in 23S rRNA and position 2 of adenine 37 in tRNAs. This chain is Probable dual-specificity RNA methyltransferase RlmN, found in Streptococcus agalactiae serotype III (strain NEM316).